We begin with the raw amino-acid sequence, 710 residues long: Polyribonucleotide nucleotidyltransferase (710 aa).

Positions 489 and 495 each coordinate Mg(2+). Residues 556-615 enclose the KH domain; the sequence is PKIDTIKIDVDKIKVVIGKGGETIDKIIAETGVKIDIDDEGNVSIYSSDQAAIDRTKEII. The S1 motif domain maps to 625-693; that stretch reads GEVYHAKVVR…EKGRVDASMK (69 aa). The tract at residues 691–710 is disordered; that stretch reads SMKALIPRPPKPEKKEEKHD. Residues 700–710 show a composition bias toward basic and acidic residues; it reads PKPEKKEEKHD.

It belongs to the polyribonucleotide nucleotidyltransferase family. Mg(2+) is required as a cofactor.

Its subcellular location is the cytoplasm. The catalysed reaction is RNA(n+1) + phosphate = RNA(n) + a ribonucleoside 5'-diphosphate. Involved in mRNA degradation. Catalyzes the phosphorolysis of single-stranded polyribonucleotides processively in the 3'- to 5'-direction. This chain is Polyribonucleotide nucleotidyltransferase, found in Streptococcus pyogenes serotype M49 (strain NZ131).